The sequence spans 1324 residues: Probable phosphoribosylformylglycinamidine synthase (1324 aa).

ATP is bound by residues 314–325, 394–396, and A681; these read GATTGTGGRIRD and SGF. The Mg(2+) site is built by D682, E721, N725, and D894. S896 serves as a coordination point for ATP. Positions 1053–1295 constitute a Glutamine amidotransferase type-1 domain; the sequence is RVAIIREEGS…LTWQWAESSE (243 aa). C1146 (nucleophile) is an active-site residue. Active-site residues include H1280 and D1282.

In the N-terminal section; belongs to the FGAMS family.

The protein resides in the cytoplasm. The enzyme catalyses N(2)-formyl-N(1)-(5-phospho-beta-D-ribosyl)glycinamide + L-glutamine + ATP + H2O = 2-formamido-N(1)-(5-O-phospho-beta-D-ribosyl)acetamidine + L-glutamate + ADP + phosphate + H(+). It participates in purine metabolism; IMP biosynthesis via de novo pathway; 5-amino-1-(5-phospho-D-ribosyl)imidazole from N(2)-formyl-N(1)-(5-phospho-D-ribosyl)glycinamide: step 1/2. In terms of biological role, phosphoribosylformylglycinamidine synthase involved in the purines biosynthetic pathway. Catalyzes the ATP-dependent conversion of formylglycinamide ribonucleotide (FGAR) and glutamine to yield formylglycinamidine ribonucleotide (FGAM) and glutamate. This is Probable phosphoribosylformylglycinamidine synthase from Caenorhabditis elegans.